The sequence spans 483 residues: Dual specificity protein kinase CLK1 (483 aa).

Residues 1 to 49 (MRHSKRTYCPDWDERDWDYGTWRSSSSHKRKKRSHSSAREQKRCRYDHS) form a disordered region. Basic residues predominate over residues 26–36 (SSHKRKKRSHS). Positions 29–33 (KRKKR) match the Nuclear localization signal motif. Residues 37–49 (SAREQKRCRYDHS) show a composition bias toward basic and acidic residues. S61 is subject to Phosphoserine. Over residues 84 to 111 (EPGHPYGEPGSRYQMHSSKSSGRSGRSS) the composition is skewed to low complexity. A disordered region spans residues 84–146 (EPGHPYGEPG…SRSVEDDEEG (63 aa)). Positions 112 to 137 (YKSKHRSRHHTSQHHSHGKSHRRKRS) are enriched in basic residues. S139 bears the Phosphoserine mark. The Protein kinase domain maps to 160 to 476 (YEIVDTLGEG…LKEALKHPFF (317 aa)). ATP-binding positions include 166–174 (LGEGAFGKV) and K190. Residue D287 is the Proton acceptor of the active site.

The protein belongs to the protein kinase superfamily. CMGC Ser/Thr protein kinase family. Lammer subfamily. Interacts with PPIG and UBL5. In terms of processing, autophosphorylates on all three types of residues.

Its subcellular location is the nucleus. The enzyme catalyses L-seryl-[protein] + ATP = O-phospho-L-seryl-[protein] + ADP + H(+). The catalysed reaction is L-threonyl-[protein] + ATP = O-phospho-L-threonyl-[protein] + ADP + H(+). It catalyses the reaction L-tyrosyl-[protein] + ATP = O-phospho-L-tyrosyl-[protein] + ADP + H(+). Regulates splicing of its own pre-mRNA according to its kinase activity; increased expression of the catalytically active form influences splicing to generate the catalytically inactive splicing variant lacking the kinase domain. Leucettine L41 inhibits its kinase activity and affects the regulation of alternative splicing mediated by phosphorylation of SR proteins. Its function is as follows. Dual specificity kinase acting on both serine/threonine and tyrosine-containing substrates. Phosphorylates serine- and arginine-rich (SR) proteins of the spliceosomal complex and may be a constituent of a network of regulatory mechanisms that enable SR proteins to control RNA splicing. Phosphorylates: SRSF1, SRSF3 and PTPN1. Regulates the alternative splicing of tissue factor (F3) pre-mRNA in endothelial cells. In Mus musculus (Mouse), this protein is Dual specificity protein kinase CLK1.